Reading from the N-terminus, the 198-residue chain is MHYPEPITKLMDSFMKLPGIGPKSAARLAFYVLDMKEDDVLDFAKALVDAKRNLSFCSVCGHITDKDPCYICSDTSRDRSVLCVVQESKDVIAMEKMRDFHGLYHVLHGTISPMDGIGPEDINIPDLLKRLQDDTIEEVILATNPNVEGEATAMYISRLLRPSGIKVTRIAHGLPVGGDLEYADEVTLSKAMEGRREV.

The C4-type zinc finger occupies 57–72 (CSVCGHITDKDPCYIC). In terms of domain architecture, Toprim spans 80 to 175 (SVLCVVQESK…KVTRIAHGLP (96 aa)).

This sequence belongs to the RecR family.

May play a role in DNA repair. It seems to be involved in an RecBC-independent recombinational process of DNA repair. It may act with RecF and RecO. This Listeria innocua serovar 6a (strain ATCC BAA-680 / CLIP 11262) protein is Recombination protein RecR.